The sequence spans 266 residues: Undecaprenyl-diphosphatase (266 aa).

Transmembrane regions (helical) follow at residues 1 to 21 (MTWLEIVVLALIQGLTEFLPI), 39 to 59 (QGLAFDVAVHVGTLLAVMVYF), 87 to 107 (WAVILGTIPACVAGLLLDSWI), 111 to 131 (LRSALVIALTTIGFGVLLGMA), 143 to 163 (FTLKDALIIGVSQALALIPGT), 186 to 206 (FSFLLSIPLIAAAGLFKGLEL), 217 to 237 (EIAGATLISAVSAYACIHLFL), and 243 to 263 (IGFMPFVIYRMLLGAGLLVWL).

The protein belongs to the UppP family.

The protein localises to the cell inner membrane. It catalyses the reaction di-trans,octa-cis-undecaprenyl diphosphate + H2O = di-trans,octa-cis-undecaprenyl phosphate + phosphate + H(+). Catalyzes the dephosphorylation of undecaprenyl diphosphate (UPP). Confers resistance to bacitracin. This chain is Undecaprenyl-diphosphatase, found in Hahella chejuensis (strain KCTC 2396).